The chain runs to 1012 residues: DNA polymerase catalytic subunit (1012 aa).

The protein belongs to the DNA polymerase type-B family.

The protein localises to the host nucleus. The enzyme catalyses DNA(n) + a 2'-deoxyribonucleoside 5'-triphosphate = DNA(n+1) + diphosphate. This Homo sapiens (Human) protein is DNA polymerase catalytic subunit (U38).